Consider the following 1412-residue polypeptide: MRIEVMIKGNSKEICIPLIKETTLEDIRELSEVEVYDISSGLNAYAILKNSTVCLEYSSKLYEMYIAIFLKMLDDTATSKEIMSDMGGMEPYSLLEVGLINAFIEALIWRVEQGEVVGRYEAFVEDLCRKMSSNLLCEIVSWKQEEDIMNTKFDYLLLSLRLIVMMVEYKTKEEGEIEKKSTFAFAKEYFYKAFALLGETKDLEDDMAFVFRASLTIDALVTRQVAGRISEVFPIVEDLPISKKNMFGIYIQMAEVCMSEDGALNDLLYSVFTTSCLVSLDTGYGNEFVEVLIAMVEQDGGSGGKRIGNVMETFRMIFHSLQDSESRGRERLIWNFLSFLSRIRMGRDMGDLNSIFLKFIVKYPETIELYSNFILINKIDFPLHTLHGISSFGFMKRFYSVLFNKVRKERHDKAHVDKLISEFLKFFLATKNKELIGILPLVPYIPSKREVLYVLYEIYSFLFEKEVIEHVGLFLLKTPALVGISSSIYYNVRYLRHLATRLSLVDVEPRMVVFLGIVYYCESKKLYNFNYTGILEYIQDEDGIRMSRDGLVGVIELIHSGYISRSHEFTLSYVNSLLTIALKPKTIETTLVIIEIILRRILEKEEKIIFMKGIHQRFQELFVLLSSKRFLSDEVSDSYRRLYRSIVERIKCAPNFYNYVVLCLADISFFDGEFPRGHFKSFNDLYNHTLSRMGVVEGFPDIFMVDHGWSCSENTDKAVSGPFLHRVCGSGKEEETKPRETKSHNMYDIIRTGTNDSVMSLESSTGSISLHSSAPMPSISRKAWLEMLDEGIRKREKSVSWLIDVIYTRRSQSSTIRTVLDLLKLRLRNKFEYEDLYILLKAYNILSIRENDSEEFLKHALHRGLDFKTDPAICYKLSMETNGFYRFFFRALHLAVSNLPCNEDLSFPERTQLVSRFDTADLVHIQNTFKQKMVQKLLERSRSPSYRTYFFNVDSLGVIDSLTIIRRLDDPSLVSRAFERLRESKNEMLFYVPQLVQMLRYKKVFEMAFSTLKELAKDEYVAHQLIWNLKANLYVDGRAAVNNYHGTFVRCIEEIMKEMPDGSRDIFLKEEEFISSLTKISSELTPHLRSSKDEKRRRINEYLSRIKLHPGIYIPFYPDLKIIEIVNGSARALQSHSKVPFMASFRVQDPGGQISIKQLIFKSGDDCRQDMLALQIISMFESIFKQANLDIFLYPYKVMATSSGTGIIEVIPNSKSRDQIGKENINNLLEYFEYKFGFKESEGYLTAICNFASSLAGYSLVGYFLNIKDRHNGNIMIDDQGRMIHIDFGYMLEMSPGNLNIEAPLKLTKEIEELLGGTSGKGFEIYQELMVKGFLALRRRSKDLVMMVDSFVDSELPCYRRNAVENFILRFRFELSDKNARRFVLSLIAESSQKFRTWMYDQYQKITNNIAF.

The PIK helical domain maps to 878 to 1055 (SMETNGFYRF…GTFVRCIEEI (178 aa)). Residues 1056–1163 (MKEMPDGSRD…ISIKQLIFKS (108 aa)) are pleckstrin homology (PH) domain conferring phosphoinositide binding specificity. A PI3K/PI4K catalytic domain is found at 1127–1396 (NGSARALQSH…LIAESSQKFR (270 aa)). The tract at residues 1133–1139 (LQSHSKV) is G-loop. The tract at residues 1266–1274 (NIKDRHNGN) is catalytic loop. Positions 1285–1308 (HIDFGYMLEMSPGNLNIEAPLKLT) are activation loop.

Belongs to the PI3/PI4-kinase family. Type III PI4K subfamily.

It localises to the cytoplasm. The catalysed reaction is a 1,2-diacyl-sn-glycero-3-phospho-(1D-myo-inositol) + ATP = a 1,2-diacyl-sn-glycero-3-phospho-(1D-myo-inositol 4-phosphate) + ADP + H(+). Acts on phosphatidylinositol (PI) in the first committed step in the production of the second messenger inositol 1,4,5,-trisphosphate. The chain is Probable phosphatidylinositol 4-kinase STT4 homolog (STT4) from Encephalitozoon cuniculi (strain GB-M1) (Microsporidian parasite).